Reading from the N-terminus, the 292-residue chain is GTP cyclohydrolase FolE2 (292 aa).

The protein belongs to the GTP cyclohydrolase IV family.

It carries out the reaction GTP + H2O = 7,8-dihydroneopterin 3'-triphosphate + formate + H(+). It functions in the pathway cofactor biosynthesis; 7,8-dihydroneopterin triphosphate biosynthesis; 7,8-dihydroneopterin triphosphate from GTP: step 1/1. Functionally, converts GTP to 7,8-dihydroneopterin triphosphate. The sequence is that of GTP cyclohydrolase FolE2 from Staphylococcus aureus (strain MRSA252).